The sequence spans 281 residues: Nucleoid occlusion protein (281 aa).

A DNA-binding region (H-T-H motif) is located at residues 145 to 164 (EALAQRLGKGQSTIANKLRL).

It belongs to the ParB family.

Its subcellular location is the cytoplasm. It is found in the nucleoid. Effects nucleoid occlusion by binding relatively nonspecifically to DNA and preventing the assembly of the division machinery in the vicinity of the nucleoid, especially under conditions that disturb the cell cycle. It helps to coordinate cell division and chromosome segregation by preventing the formation of the Z ring through the nucleoid, which would cause chromosome breakage. The sequence is that of Nucleoid occlusion protein from Geobacillus sp. (strain WCH70).